The chain runs to 680 residues: Oligopeptidase A (680 aa).

His-469 provides a ligand contact to Zn(2+). Glu-470 is a catalytic residue. Residues His-473 and His-476 each contribute to the Zn(2+) site.

The protein belongs to the peptidase M3 family. Requires Zn(2+) as cofactor.

The enzyme catalyses Hydrolysis of oligopeptides, with broad specificity. Gly or Ala commonly occur as P1 or P1' residues, but more distant residues are also important, as is shown by the fact that Z-Gly-Pro-Gly-|-Gly-Pro-Ala is cleaved, but not Z-(Gly)(5).. May play a specific role in the degradation of signal peptides after they are released from precursor forms of secreted proteins. Can cleave N-acetyl-L-Ala(4). The sequence is that of Oligopeptidase A (prlC) from Escherichia coli (strain K12).